The sequence spans 270 residues: MPELPEVEVTRRGFAERIAGARIDAVRIGKPLRWALMVMPEALVGRRVLQVRRRGKYLLIDLDRGLLLLHLGMSGSLRFDAALPAPGVHDHFDLVTELGTLRLNDPRRFGAVVYVEDEAAPWAIKLLGGLGMEPLGDAFDLDAFHAGLRKRKAAVKQVLLAGDVVVGVGNIYASEALFLAGIRPTLSAARISRPRAARLHAAVREILARAVEKGGSTLRDFSNVEGQSGYFQLEATVYGRAGEPCRVCATPIRLLRQGQRSTYYCPNCQK.

Proline 2 functions as the Schiff-base intermediate with DNA in the catalytic mechanism. Glutamate 3 functions as the Proton donor in the catalytic mechanism. Catalysis depends on lysine 56, which acts as the Proton donor; for beta-elimination activity. DNA is bound by residues histidine 89, arginine 107, and arginine 151. An FPG-type zinc finger spans residues 236 to 270 (TVYGRAGEPCRVCATPIRLLRQGQRSTYYCPNCQK). Catalysis depends on arginine 260, which acts as the Proton donor; for delta-elimination activity.

The protein belongs to the FPG family. As to quaternary structure, monomer. The cofactor is Zn(2+).

The enzyme catalyses Hydrolysis of DNA containing ring-opened 7-methylguanine residues, releasing 2,6-diamino-4-hydroxy-5-(N-methyl)formamidopyrimidine.. The catalysed reaction is 2'-deoxyribonucleotide-(2'-deoxyribose 5'-phosphate)-2'-deoxyribonucleotide-DNA = a 3'-end 2'-deoxyribonucleotide-(2,3-dehydro-2,3-deoxyribose 5'-phosphate)-DNA + a 5'-end 5'-phospho-2'-deoxyribonucleoside-DNA + H(+). Its function is as follows. Involved in base excision repair of DNA damaged by oxidation or by mutagenic agents. Acts as a DNA glycosylase that recognizes and removes damaged bases. Has a preference for oxidized purines, such as 7,8-dihydro-8-oxoguanine (8-oxoG). Has AP (apurinic/apyrimidinic) lyase activity and introduces nicks in the DNA strand. Cleaves the DNA backbone by beta-delta elimination to generate a single-strand break at the site of the removed base with both 3'- and 5'-phosphates. This chain is Formamidopyrimidine-DNA glycosylase, found in Variovorax paradoxus (strain S110).